The sequence spans 171 residues: Peptide deformylase 1 (171 aa).

Residues Cys-99 and His-141 each coordinate Fe cation. Glu-142 is an active-site residue. Residue His-145 participates in Fe cation binding.

This sequence belongs to the polypeptide deformylase family. It depends on Fe(2+) as a cofactor.

It catalyses the reaction N-terminal N-formyl-L-methionyl-[peptide] + H2O = N-terminal L-methionyl-[peptide] + formate. Functionally, removes the formyl group from the N-terminal Met of newly synthesized proteins. Requires at least a dipeptide for an efficient rate of reaction. N-terminal L-methionine is a prerequisite for activity but the enzyme has broad specificity at other positions. The sequence is that of Peptide deformylase 1 from Xanthomonas campestris pv. campestris (strain ATCC 33913 / DSM 3586 / NCPPB 528 / LMG 568 / P 25).